We begin with the raw amino-acid sequence, 638 residues long: Threonine--tRNA ligase (638 aa).

In terms of domain architecture, TGS spans 1–61 (MPDIKLPDGS…EQNADLAIIT (61 aa)). The catalytic stretch occupies residues 242 to 533 (DHRRLGKQYD…LIENFAGALP (292 aa)). Residues Cys333, His384, and His510 each contribute to the Zn(2+) site.

The protein belongs to the class-II aminoacyl-tRNA synthetase family. Homodimer. Zn(2+) is required as a cofactor.

The protein resides in the cytoplasm. It catalyses the reaction tRNA(Thr) + L-threonine + ATP = L-threonyl-tRNA(Thr) + AMP + diphosphate + H(+). Catalyzes the attachment of threonine to tRNA(Thr) in a two-step reaction: L-threonine is first activated by ATP to form Thr-AMP and then transferred to the acceptor end of tRNA(Thr). Also edits incorrectly charged L-seryl-tRNA(Thr). The sequence is that of Threonine--tRNA ligase from Dechloromonas aromatica (strain RCB).